A 98-amino-acid polypeptide reads, in one-letter code: Endoribonuclease antitoxin GhoS (98 aa).

As to quaternary structure, monomer. In terms of processing, unlike other TA antitoxins, this protein is stable.

Functionally, antitoxin component of a type V toxin-antitoxin (TA) system. Neutralizes the toxic effects of toxin GhoT by digesting ghoT transcripts in a sequence-specific manner. In concert with GhoT is involved in reducing cell growth during antibacterial stress. The sequence is that of Endoribonuclease antitoxin GhoS from Escherichia coli O157:H7.